Here is a 313-residue protein sequence, read N- to C-terminus: MATKINKAIKISQKHLLGIQDLSINDVNFILEEAKSFIKLNQSKNKRLNVLSGKTQINLFFEPSTRTQSSFELAGKRLGADVMSMNMANSAIKKGETLIDTAMTLNAMHPDIIVIRHQDSGACNLLSQKVNCAVLNAGDGSREHPTQALLDALTIINRKKKIEGLRVAICGDITHSRVARSNIYLLNMLGAEVNIIAPSNLMPKEIEKFGVNTFTDMKKGLKDCDIVMMLRLQNERMTSSFLSSNREYYEYYGLTPDKLAHAKDDALIMHPGPMNRGIEIDTKLADDINRSVIKEQVELGVAVRMACLKIFCE.

2 residues coordinate carbamoyl phosphate: Arg66 and Thr67. Lys94 is a binding site for L-aspartate. Carbamoyl phosphate is bound by residues Arg116, His144, and Gln147. L-aspartate-binding residues include Arg177 and Arg231. Carbamoyl phosphate is bound by residues Gly272 and Pro273.

It belongs to the aspartate/ornithine carbamoyltransferase superfamily. ATCase family. In terms of assembly, heterododecamer (2C3:3R2) of six catalytic PyrB chains organized as two trimers (C3), and six regulatory PyrI chains organized as three dimers (R2).

The catalysed reaction is carbamoyl phosphate + L-aspartate = N-carbamoyl-L-aspartate + phosphate + H(+). It functions in the pathway pyrimidine metabolism; UMP biosynthesis via de novo pathway; (S)-dihydroorotate from bicarbonate: step 2/3. Its function is as follows. Catalyzes the condensation of carbamoyl phosphate and aspartate to form carbamoyl aspartate and inorganic phosphate, the committed step in the de novo pyrimidine nucleotide biosynthesis pathway. The polypeptide is Aspartate carbamoyltransferase catalytic subunit (Pelagibacter ubique (strain HTCC1062)).